A 181-amino-acid polypeptide reads, in one-letter code: RNA-binding protein (181 aa).

The disordered stretch occupies residues 106–181 (FLTSVNPGES…DANTRKSKRK (76 aa)). Residues 141-157 (RNSKKGAKKSSSARKKK) show a composition bias toward basic residues. Over residues 160–172 (SSNSETDLSSDSD) the composition is skewed to low complexity.

The protein belongs to the phytoreovirus RNA-binding protein family.

The protein resides in the host cytoplasm. Its function is as follows. Constituent of viral factories. Binds to ssRNA and dsRNA. This is RNA-binding protein from Rice dwarf virus (isolate Akita) (RDV).